Consider the following 237-residue polypeptide: Pyridoxal phosphate homeostasis protein (237 aa).

Lysine 31 is modified (N6-(pyridoxal phosphate)lysine).

The protein belongs to the pyridoxal phosphate-binding protein YggS/PROSC family.

It localises to the cytoplasm. Its subcellular location is the nucleus. Pyridoxal 5'-phosphate (PLP)-binding protein, which may be involved in intracellular homeostatic regulation of pyridoxal 5'-phosphate (PLP), the active form of vitamin B6. In Schizosaccharomyces pombe (strain 972 / ATCC 24843) (Fission yeast), this protein is Pyridoxal phosphate homeostasis protein.